The primary structure comprises 865 residues: Fatty acyl-CoA synthetase and RNA processing-associated kinase 1 (865 aa).

The Protein kinase domain occupies 41-313 (YILGSTLGEG…LKQIKKHEWL (273 aa)). ATP-binding positions include 47 to 55 (LGEGEFGKV) and Lys-80. The active-site Proton acceptor is Asp-175. Residues 341–398 (KPRRRYGSRPQSSCSTSSLGSRSDKRDSLVIDSTLITFPAPPQESQNHIITRPASIAS) are disordered. Residues 352 to 361 (SSCSTSSLGS) are compositionally biased toward low complexity. A Phosphoserine modification is found at Ser-441. Disordered stretches follow at residues 480 to 554 (ISGS…YTTP), 673 to 733 (TEES…LNEA), and 754 to 782 (SLYS…YQTN). Over residues 494–538 (STTMQTSKIQPNNMASSQNHQYNKNKTQNSLQSAKNFYRTSSSSH) the composition is skewed to polar residues. Composition is skewed to basic and acidic residues over residues 690 to 708 (EGQE…EKGS) and 724 to 733 (NHLERSLNEA).

The protein belongs to the protein kinase superfamily. Ser/Thr protein kinase family. Interacts with FAA3, POL5 and TPA1.

Its subcellular location is the cytoplasm. It catalyses the reaction L-seryl-[protein] + ATP = O-phospho-L-seryl-[protein] + ADP + H(+). The catalysed reaction is L-threonyl-[protein] + ATP = O-phospho-L-threonyl-[protein] + ADP + H(+). In terms of biological role, putative serine/threonine-protein kinase that may be involved in rRNA transcription and ribosome biogenesis. In Saccharomyces cerevisiae (strain ATCC 204508 / S288c) (Baker's yeast), this protein is Fatty acyl-CoA synthetase and RNA processing-associated kinase 1 (FRK1).